The chain runs to 503 residues: Lithocholate 6-beta-hydroxylase (503 aa).

Residue C442 coordinates heme.

Belongs to the cytochrome P450 family. The cofactor is heme.

The protein resides in the endoplasmic reticulum membrane. It localises to the microsome membrane. It carries out the reaction lithocholate + reduced [NADPH--hemoprotein reductase] + O2 = 6beta-hydroxylithocholate + oxidized [NADPH--hemoprotein reductase] + H2O + H(+). Catalyzes the 6 beta-hydroxylation of lithocholic acid and steroid hormones. This chain is Lithocholate 6-beta-hydroxylase (CYP3A10), found in Mesocricetus auratus (Golden hamster).